We begin with the raw amino-acid sequence, 174 residues long: RNA pyrophosphohydrolase (174 aa).

Residues 6–149 (GFRANVGIII…KRDVYRKVMK (144 aa)) form the Nudix hydrolase domain. The Nudix box motif lies at 38 to 59 (GGVDDGESAEEAMYRELYEEVG).

The protein belongs to the Nudix hydrolase family. RppH subfamily. It depends on a divalent metal cation as a cofactor.

Accelerates the degradation of transcripts by removing pyrophosphate from the 5'-end of triphosphorylated RNA, leading to a more labile monophosphorylated state that can stimulate subsequent ribonuclease cleavage. The sequence is that of RNA pyrophosphohydrolase from Shewanella sp. (strain ANA-3).